The sequence spans 829 residues: MEFFGMGYNFKLVEQEIQKRWDFKIAGNDGINCYVLGMFPYPSGNIHMGHIRNYTIGDVIARYKRAHGLKVLHPIGWDAFGLPAENAALSYGVNPAVWTERNIESMRKQLKSIGISYNWDRELATCKEDYYKHEQAFFLDFLQQGLAYRKESWVNWDPVDNTVLANEQVVDGRGWRSGAKIERRKLSQWFLKITDFADSLLDGLKTLDGWPEKVKLMQERWIGKTEGVILEFATSCGQKLEVFSTMPHMLFGASFCAVSAEHPILRHVTDEAFSARVRGIIECSGDEEKQKIGADTGLFATHPLLDRKLPIYAANYVLSEYGTGAVFGCPAHDQRDFEFAVAHGLDIYQVVFPDDGVQYDLQKEAYSGDGTYRNSEFLNGLRVDAARNAMIQKLESMGGCRRVTNYRLHDWGISRQRYWGCPIPVVHCEKCGIVPVDRQDLPISLPEEVDFSRGGNPLDHHPTWKHVQCPKCQSSAQRETDTFDTFFESSWYFAAFCSEQGGINAADCNKLLPVDYYIGGVEHAVLHLLYARFFCRALKKCGHLAVEEPFRNLITQGMVCHSVYRDAAGNYLFPEDAQRMIRDGEAVQRGKVEKMSKSKKNVVDPSHIIKKYGADTVRLFMLSDTPPERDIEWSDVGVEGAWRYLERLWRLFEDNSSIGADFDTADVKAEDRVYLSGIHKLLRGLSADMEHCRLNCAVAKFREMSNTVFEMVKCGVSQQVINESVCILLRVMEPFIPHIAEKLWERIGGEGMLCNRQWPSAREDLLTEDLVTIAVQVNGKLCSTLKVGAQCDGEEVKAEALKVAQRKLGDKEVRNIYFVPGRVVNIVTK.

Residues 40–50 carry the 'HIGH' region motif; sequence PYPSGNIHMGH. Positions 594 to 598 match the 'KMSKS' region motif; that stretch reads KMSKS. Lys-597 serves as a coordination point for ATP.

This sequence belongs to the class-I aminoacyl-tRNA synthetase family.

It is found in the cytoplasm. It carries out the reaction tRNA(Leu) + L-leucine + ATP = L-leucyl-tRNA(Leu) + AMP + diphosphate. The polypeptide is Leucine--tRNA ligase (Anaplasma marginale (strain St. Maries)).